A 302-amino-acid polypeptide reads, in one-letter code: Polyadenylate-binding protein 2 (302 aa).

Residues 1-12 (MAAAAAAAAAAG) show a composition bias toward low complexity. Positions 1–111 (MAAAAAAAAA…EADPGDGAIE (111 aa)) are disordered. Ala2 carries the N-acetylalanine modification. Residues 2 to 141 (AAAAAAAAAA…LKELQNEVEK (140 aa)) form an interaction with SKIP region. Arg17 carries the post-translational modification Omega-N-methylarginine. The residue at position 19 (Ser19) is a Phosphoserine. Positions 30–47 (GAGGEAGEGDPGGAGDYG) are enriched in gly residues. Acidic residues predominate over residues 51-68 (ESEELEPGELLPEPEPEE). Ser52 carries the phosphoserine modification. Residues 73–83 (PRAPPGAPGPG) show a composition bias toward pro residues. Phosphoserine is present on Ser91. Positions 111–147 (EDPELEAIKARVREMEEEAEKLKELQNEVEKQMNMSP) form a coiled coil. The segment at 115-143 (LEAIKARVREMEEEAEKLKELQNEVEKQM) is stimulates PAPOLA. A phosphoserine mark is found at Ser146 and Ser231. One can recognise an RRM domain in the interval 168–245 (RSIYVGNVDY…RQIKVIPKRT (78 aa)). Asymmetric dimethylarginine; alternate occurs at positions 234, 255, and 259. Omega-N-methylarginine; alternate occurs at positions 234, 255, and 259. A strong poly(A) affinity and self-association region spans residues 255 to 302 (RGFPRSRYRARTTNYNSSRSRFYSGFNSRPRGRIYRGRARATSWYSPY). 11 positions are modified to asymmetric dimethylarginine: Arg261, Arg263, Arg265, Arg273, Arg275, Arg283, Arg285, Arg287, Arg290, Arg292, and Arg294. The interval 282–302 (SRPRGRIYRGRARATSWYSPY) is interaction with PAPOLA.

Monomer and homooligomer. Identified in a IGF2BP1-dependent mRNP granule complex containing untranslated mRNAs. Binds RNA as a monomer and oligomerizes when bound to poly(A). Interacts with PAPOLA, but only in presence of oligo(A) RNA. Interacts with NUDT21/CPSF5 and transportin. Associates in a ternary complex with CPSF4 and NS/NS1 and interaction with NS/NS1, blocks nuclear export of host cell mRNAs. Associates in a single complex with SKIP and MYOD1 and interacts with SKIP in differentiated myocytes. May interact with SETX. Interacts (via RRM domain and C-terminal arginine-rich region) with ZFP36 (via hypophosphorylated form); this interaction occurs in the nucleus in a RNA-independent manner, decreases in presence of single-stranded poly(A) RNA-oligomer and in a p38-dependent-manner and may down-regulated RNA poly(A) polymerase activity. Component of the poly(A) tail exosome targeting (PAXT) complex composed of PABPN1, ZFC3H1 and MTREX. Interacts with ZFC3H1 in a RNase-insensitive manner. Interacts with FRG1. Interacts with ZC3H11A. Arginine dimethylation is asymmetric and involves PRMT1 and PRMT3. It does not influence the RNA binding properties. In terms of tissue distribution, ubiquitous.

The protein localises to the cytoplasm. Its subcellular location is the nucleus. It is found in the nucleus speckle. In terms of biological role, involved in the 3'-end formation of mRNA precursors (pre-mRNA) by the addition of a poly(A) tail of 200-250 nt to the upstream cleavage product. Stimulates poly(A) polymerase (PAPOLA) conferring processivity on the poly(A) tail elongation reaction and also controls the poly(A) tail length. Increases the affinity of poly(A) polymerase for RNA. Is also present at various stages of mRNA metabolism including nucleocytoplasmic trafficking and nonsense-mediated decay (NMD) of mRNA. Cooperates with SKIP to synergistically activate E-box-mediated transcription through MYOD1 and may regulate the expression of muscle-specific genes. Binds to poly(A) and to poly(G) with high affinity. May protect the poly(A) tail from degradation. Subunit of the trimeric poly(A) tail exosome targeting (PAXT) complex, a complex that directs a subset of long and polyadenylated poly(A) RNAs for exosomal degradation. The RNA exosome is fundamental for the degradation of RNA in eukaryotic nuclei. Substrate targeting is facilitated by its cofactor MTREX, which links to RNA-binding protein adapters. The chain is Polyadenylate-binding protein 2 (Pabpn1) from Mus musculus (Mouse).